Here is a 32-residue protein sequence, read N- to C-terminus: Alpha-conotoxin RgIA (32 aa).

A propeptide spanning residues 1 to 19 (SNKRKNAAMLDMIAQHAIR) is cleaved from the precursor. Cystine bridges form between C21/C27 and C22/C31.

The protein belongs to the conotoxin A superfamily. Post-translationally, the disulfide bond CysI-CysIII is important for alpha-9-alpha-10 subtype inhibition, whereas the bond CysII-CysIV contributes to GABA(B) modulation. As to expression, expressed by the venom duct.

It localises to the secreted. In terms of biological role, this toxin target two types of receptors, the nicotinic acetylcholine receptor (nAChR) and the G-protein-coupled receptor GABA(B). It specifically inhibits the alpha-9-alpha-10/CHRNA9-CHRNA10 nAChR, with preference for rat receptors. It interacts with the alpha-10(+)/alpha-9(-)interface of the receptor. It shows a two order of magnitude species difference potency for the rat versus human alpha-9-alpha-10 nAChR, due to the Thr-86 located in the alpha-9 nAChR subunit. This toxin also shows inhibition of high voltage-activated (HVA) calcium channels (Cav2.2) by acting on GABA(B) receptors (GABBR1 and GABBR2). In vivo, this toxin produces an acute antinociceptive effect in peripheral nerve-injured rats, which may be related to the inhibition of immune cell buildup at the site of nerve injury. In addition, when intramuscularly injected into rats following chronic constriction injury of the sciatic nerve, this toxin protects peripheral nervous tissues as well as prevents central maladaptive plasticity by inhibiting glial cell activation. The chain is Alpha-conotoxin RgIA from Conus regius (Crown cone).